The following is a 351-amino-acid chain: S-adenosylmethionine:tRNA ribosyltransferase-isomerase (351 aa).

This sequence belongs to the QueA family. In terms of assembly, monomer.

Its subcellular location is the cytoplasm. The catalysed reaction is 7-aminomethyl-7-carbaguanosine(34) in tRNA + S-adenosyl-L-methionine = epoxyqueuosine(34) in tRNA + adenine + L-methionine + 2 H(+). The protein operates within tRNA modification; tRNA-queuosine biosynthesis. Functionally, transfers and isomerizes the ribose moiety from AdoMet to the 7-aminomethyl group of 7-deazaguanine (preQ1-tRNA) to give epoxyqueuosine (oQ-tRNA). The chain is S-adenosylmethionine:tRNA ribosyltransferase-isomerase from Hahella chejuensis (strain KCTC 2396).